A 255-amino-acid polypeptide reads, in one-letter code: Ribonuclease HII (255 aa).

Residues 72–255 enclose the RNase H type-2 domain; it reads AIICGIDEVG…KSFEPIKSLL (184 aa). Positions 78, 79, and 170 each coordinate a divalent metal cation.

This sequence belongs to the RNase HII family. It depends on Mn(2+) as a cofactor. Requires Mg(2+) as cofactor.

The protein resides in the cytoplasm. The enzyme catalyses Endonucleolytic cleavage to 5'-phosphomonoester.. In terms of biological role, endonuclease that specifically degrades the RNA of RNA-DNA hybrids. The sequence is that of Ribonuclease HII from Staphylococcus aureus (strain Mu3 / ATCC 700698).